The sequence spans 362 residues: Sulfoquinovose monooxygenase (362 aa).

The protein belongs to the SsuD family.

The catalysed reaction is 6-sulfo-D-quinovose + FMNH2 + O2 = 6-dehydro-D-glucose + FMN + sulfite + H2O + 2 H(+). In terms of biological role, part of the alkanesulfonate monooxygenase (sulfo-ASMO) pathway, a D-sulfoquinovose degradation pathway that enables the complete utilization of all carbons within sulfoquinovose (SQ) with concomitant production of inorganic sulfite. Catalyzes the oxidative desulfurization of sulfoquinovose to sulfite and 6-dehydro-D-glucose. In Novosphingobium aromaticivorans (strain ATCC 700278 / DSM 12444 / CCUG 56034 / CIP 105152 / NBRC 16084 / F199), this protein is Sulfoquinovose monooxygenase.